The sequence spans 111 residues: Photosystem II reaction center Psb28 protein (111 aa).

Belongs to the Psb28 family. Part of the photosystem II complex.

The protein resides in the cellular thylakoid membrane. The chain is Photosystem II reaction center Psb28 protein from Trichormus variabilis (strain ATCC 29413 / PCC 7937) (Anabaena variabilis).